The following is a 314-amino-acid chain: tRNA selenocysteine 1-associated protein 1 (314 aa).

2 consecutive RRM domains span residues 2-85 (NSLW…RSNY) and 94-173 (FSLF…LASS).

It belongs to the RRM TRSPAP family.

It is found in the nucleus. Its subcellular location is the cytoplasm. Functionally, involved in the early steps of selenocysteine biosynthesis and tRNA(Sec) charging to the later steps resulting in the cotranslational incorporation of selenocysteine into selenoproteins. The sequence is that of tRNA selenocysteine 1-associated protein 1 from Danio rerio (Zebrafish).